Reading from the N-terminus, the 176-residue chain is MARPDKAAAVAELTDKFRSSNAAVLTEYRGLTVAQLKTLRRSLGENAQYAVVKNTLTKIAAKEAGITLEDQLFAGPTAVAFVTGDPVESAKGLRDFAKENPNLVIKGGVLDGKALSADEIKKLADLESREVLLSKLAGAFKAKQSQAASVFQALPSKLVRTVDALRAKQAEQGGAE.

The protein belongs to the universal ribosomal protein uL10 family. Part of the ribosomal stalk of the 50S ribosomal subunit. The N-terminus interacts with L11 and the large rRNA to form the base of the stalk. The C-terminus forms an elongated spine to which L12 dimers bind in a sequential fashion forming a multimeric L10(L12)X complex.

Its function is as follows. Forms part of the ribosomal stalk, playing a central role in the interaction of the ribosome with GTP-bound translation factors. This Streptomyces antibioticus protein is Large ribosomal subunit protein uL10 (rplJ).